We begin with the raw amino-acid sequence, 1030 residues long: Toll-like receptor 9 (1030 aa).

An N-terminal signal peptide occupies residues 1 to 24; that stretch reads MGPRCTLHPLSLLVQVTALAAALA. Over 25 to 816 the chain is Extracellular; sequence QGRLPAFLPC…LCLDETLSWN (792 aa). Cys-34 and Cys-44 are oxidised to a cystine. Residue 46-50 participates in DNA binding; that stretch reads WLFLK. LRR repeat units lie at residues 61–84, 86–109, 121–146, 149–165, 166–189, 197–220, 222–241, 242–267, 282–305, 307–331, 332–355, 362–385, 389–412, 414–439, 469–493, 495–518, 519–542, 544–571, 573–597, 599–621, 626–649, 651–674, 675–698, 700–722, 723–746, and 748–771; these read RANV…DFVH, SSLR…HFPC, VPTL…SLVS, LSRT…LTGL, HALR…ALEV, LGNL…LPPS, ETLL…DLAN, LTAL…CREC, LSRL…WFRG, DRLQ…AFQG, LARL…HLHL, LRSL…TLQP, LPML…IFGA, PGLL…TREV, CKAF…MFAR, SRLE…QFVP, LTSL…SFTE, PRLE…SFVA, LPAL…LCSA, LCAL…LYLR, LRSL…ALDN, PKSL…SLTL, LPKL…SLPS, TQLR…FFAL, AKQL…WFGS, and VGNL…TFVG. A glycan (N-linked (GlcNAc...) asparagine) is linked at Asn-63. DNA-binding positions include 71 to 76 and 94 to 108; these read SNRIHH and KWNC…MHFP. An intrachain disulfide couples Cys-97 to Cys-109. A glycan (N-linked (GlcNAc...) asparagine) is linked at Asn-128. Residues Tyr-131, Arg-151, and 178 to 180 each bind DNA; that span reads YYK. Cys-177 and Cys-183 are joined by a disulfide. The N-linked (GlcNAc...) asparagine glycan is linked to Asn-199. Tyr-207 is a DNA binding site. Asn-209 and Asn-241 each carry an N-linked (GlcNAc...) asparagine glycan. 2 disulfide bridges follow: Cys-254-Cys-267 and Cys-257-Cys-264. A lipid anchor (S-palmitoyl cysteine) is attached at Cys-257. Arg-261 provides a ligand contact to DNA. Residue Cys-264 is the site of S-palmitoyl cysteine attachment. Residue Asn-339 is glycosylated (N-linked (GlcNAc...) asparagine). A disulfide bond links Cys-469 and Cys-499. Residue Asn-512 is glycosylated (N-linked (GlcNAc...) asparagine). The N-linked (GlcNAc...) asparagine glycan is linked to Asn-566. 2 N-linked (GlcNAc...) asparagine glycosylation sites follow: Asn-668 and Asn-693. Residue Asn-730 is glycosylated (N-linked (GlcNAc...) asparagine). 2 cysteine pairs are disulfide-bonded: Cys-763–Cys-789 and Cys-765–Cys-808. A helical transmembrane segment spans residues 817–837; that stretch reads CFGISLLAMALGLVVPMLHHL. Residues 838–1030 lie on the Cytoplasmic side of the membrane; the sequence is CGWDLWYCFH…NFCRGPTTAE (193 aa). A TIR domain is found at 865 to 1010; the sequence is LFYDAFVVFD…SFWAQLGTAL (146 aa).

It belongs to the Toll-like receptor family. Monomer and homodimer. Exists as a monomer in the absence of unmethylated cytidine-phosphate-guanosine (CpG) ligand. Proteolytic processing of an insertion loop (Z-loop) is required for homodimerization upon binding to the unmethylated CpG ligand leading to its activation. Interacts with MYD88 via their respective TIR domains. Interacts with BTK. Interacts (via transmembrane domain) with UNC93B1. Interacts with CD300LH; the interaction may promote full activation of TLR9-triggered innate responses. Interacts with CNPY3 and HSP90B1; this interaction is required for proper folding in the endoplasmic reticulum. Interacts with SMPDL3B. Interacts with CD82; this interaction is essential for TLR9-dependent myddosome formation in response to CpG stimulation. Post-translationally, activated by proteolytic cleavage of the flexible loop between repeats LRR14 and LRR15 within the ectodomain. Cleavage requires UNC93B1. Proteolytically processed by first removing the majority of the ectodomain by either asparagine endopeptidase (AEP) or a cathepsin followed by a trimming event that is solely cathepsin mediated and required for optimal receptor signaling. Palmitoylated by ZDHHC3 in the Golgi regulates TLR9 trafficking from the Golgi to endosomes. Depalmitoylation by PPT1 controls the release of TLR9 from UNC93B1 in endosomes.

It is found in the endoplasmic reticulum membrane. It localises to the endosome. Its subcellular location is the lysosome. The protein resides in the cytoplasmic vesicle. The protein localises to the phagosome. Its function is as follows. Key component of innate and adaptive immunity. TLRs (Toll-like receptors) control host immune response against pathogens through recognition of molecular patterns specific to microorganisms. TLR9 is a nucleotide-sensing TLR which is activated by unmethylated cytidine-phosphate-guanosine (CpG) dinucleotides. Acts via MYD88 and TRAF6, leading to NF-kappa-B activation, cytokine secretion and the inflammatory response. Upon CpG stimulation, induces B-cell proliferation, activation, survival and antibody production. This is Toll-like receptor 9 (TLR9) from Sus scrofa (Pig).